Consider the following 144-residue polypeptide: uncharacterized protein (144 aa).

An N-terminal signal peptide occupies residues 1 to 16 (MRKFLIVLLLPLLVLA).

This is an uncharacterized protein from Aquifex aeolicus (strain VF5).